The following is a 1022-amino-acid chain: Histone-lysine N-methyltransferase TRX1 (1022 aa).

Residues 31–151 (SSAPCPLPKK…QRQGVHKEAA (121 aa)) form a disordered region. Residues 65–78 (EGPPPSPATAPPML) show a composition bias toward pro residues. Positions 127-139 (GGAERRGYFSEPK) are enriched in basic and acidic residues. In terms of domain architecture, PWWP spans 264–327 (PGDLVWAKLT…LKQAVPFLNG (64 aa)). Residues 367 to 393 (SMEKGSSDANSNKDVHSCDNLSEDKTA) show a composition bias toward basic and acidic residues. Residues 367-399 (SMEKGSSDANSNKDVHSCDNLSEDKTAESGGDY) are disordered. An FYR N-terminal domain is found at 402–461 (MTPIELGNLRVSKLGRIVTDSDYFHNKKHIWPEGYTAFRKFRSVKDPHVVILYKMEVLRN). In terms of domain architecture, FYR C-terminal spans 465–548 (KARPLFRVTS…SCLKYFENAG (84 aa)). The Phorbol-ester/DAG-type zinc finger occupies 553–609 (GYRAVHVNWKDLDYCSVCDMDEEYEDNLFLQCDKCRMMVHARCYGELEPLNGVLWLC). 2 consecutive PHD-type zinc fingers follow at residues 564-615 (LDYC…CRPE) and 677-744 (LLCS…KKHR). Residues 620–744 (SPRCCLCPVT…RLLSYCKKHR (125 aa)) are extended PHD domain (ePHD). The region spanning 861–979 (RRLAFGKSRI…PWEELTYDYR (119 aa)) is the SET domain. Cysteine 943 lines the Zn(2+) pocket. Residue tyrosine 978 participates in S-adenosyl-L-methionine binding. Residues 985–1001 (QRLPCYCGFPKCRGVVN) form the Post-SET domain. Residues cysteine 989, cysteine 991, and cysteine 996 each contribute to the Zn(2+) site.

The protein belongs to the class V-like SAM-binding methyltransferase superfamily. Histone-lysine methyltransferase family. TRX/MLL subfamily. As to quaternary structure, interacts with EHD3. As to expression, expressed in leaf blades and panicles.

The protein resides in the nucleus. The catalysed reaction is L-lysyl(4)-[histone H3] + S-adenosyl-L-methionine = N(6)-methyl-L-lysyl(4)-[histone H3] + S-adenosyl-L-homocysteine + H(+). Possesses histone H3 methyltransferase activity in vitro. Methylates 'Lys-4' of histone H3. H3 'Lys-4' methylation represents a specific tag for epigenetic transcriptional activation. Functions as a receptor for the lipid messenger phosphatidylinositol 5-phosphate (PI5P), which negatively regulates its transcriptional activation activity. Involved in the regulation of flowering time and floral induction under long day (LD) conditions. Acts as an activator of flowering under LD conditions. May function through binding to EHD3, a repressor of GHD7. This chain is Histone-lysine N-methyltransferase TRX1, found in Oryza sativa subsp. japonica (Rice).